The following is a 314-amino-acid chain: Methionyl-tRNA formyltransferase (314 aa).

109–112 (SLLP) provides a ligand contact to (6S)-5,6,7,8-tetrahydrofolate.

Belongs to the Fmt family.

The enzyme catalyses L-methionyl-tRNA(fMet) + (6R)-10-formyltetrahydrofolate = N-formyl-L-methionyl-tRNA(fMet) + (6S)-5,6,7,8-tetrahydrofolate + H(+). In terms of biological role, attaches a formyl group to the free amino group of methionyl-tRNA(fMet). The formyl group appears to play a dual role in the initiator identity of N-formylmethionyl-tRNA by promoting its recognition by IF2 and preventing the misappropriation of this tRNA by the elongation apparatus. This chain is Methionyl-tRNA formyltransferase, found in Syntrophomonas wolfei subsp. wolfei (strain DSM 2245B / Goettingen).